The chain runs to 451 residues: Proton-coupled amino acid transporter-like protein acs (451 aa).

Topologically, residues 1 to 48 (MNDDIKTVTVYPTTLELTTPTKSANGSNDDYDPHQHRELKNPTTNFQT) are cytoplasmic. The helical transmembrane segment at 49–69 (FAHFLKASVGTGVLAMPSAFA) threads the bilayer. The Extracellular segment spans residues 70 to 80 (HAGYVNGTLLT). N-linked (GlcNAc...) asparagine glycosylation is present at asparagine 75. The helical transmembrane segment at 81-101 (LIIGSLALYCLHILIKCMYIL) threads the bilayer. Residues 102-136 (CKRQRVPYVSFSQAMNLGLKQGPPWLRCLAPIAVP) are Cytoplasmic-facing. The helical transmembrane segment at 137 to 157 (FVDGFLAFYHFGICCVYVVFI) threads the bilayer. Topologically, residues 158-167 (AESIKQLVDE) are extracellular. The helical transmembrane segment at 168-188 (YLVVWDVRIHMCIIIVPLLLI) threads the bilayer. Residues 189–199 (YSIKNLKLLAP) lie on the Cytoplasmic side of the membrane. A helical membrane pass occupies residues 200–220 (FSSAANLLLLVGFGIILYYIF). Residues 221–237 (EELPPLSERDPFVAAGK) lie on the Extracellular side of the membrane. The helical transmembrane segment at 238-258 (LPTFFGTVLFALEAVGVILAI) threads the bilayer. The Cytoplasmic portion of the chain corresponds to 259-272 (EENMATPKSFVGPC). A helical membrane pass occupies residues 273–293 (GILNSGMSIVLGLYVLLGFFG). Residues 294 to 320 (YWKYGNESEGSITLNIPQSEIPAQVVK) lie on the Extracellular side of the membrane. N-linked (GlcNAc...) asparagine glycosylation is present at asparagine 299. Residues 321–341 (VFFAITTWISYALQGYVTAHI) form a helical membrane-spanning segment. At 342–357 (LWDKYLAKRFKETRQT) the chain is on the cytoplasmic side. A helical membrane pass occupies residues 358 to 378 (FYELIFRAIIVLLTFGCAVAI). Residues 379–382 (PDLS) lie on the Extracellular side of the membrane. A helical membrane pass occupies residues 383-403 (VFLSLVGSFCLSILGLIFPVL). Residues 404–420 (LQICVQYTEGYGPFRIK) are Cytoplasmic-facing. The helical transmembrane segment at 421–441 (LIINLLLLCFGIFGGVVGTYV) threads the bilayer. At 442–451 (SILDIIAVYK) the chain is on the extracellular side.

The protein belongs to the amino acid/polyamine transporter 2 family. In terms of tissue distribution, expressed in the proximal and distal regions of the midgut; expressed in enterocytes and progenitor cells. Expression increases in response to intestinal bacterial infection and spreads further into the midgut, eventually covering the entire midgut.

It localises to the cell membrane. Its subcellular location is the late endosome membrane. It is found in the lysosome membrane. The protein resides in the basal cell membrane. Functionally, amino acid transporter which has pH-dependent electrogenic transport activity for alanine, glycine and proline. Plays a role in positive regulation of growth by directly or indirectly modulating the effects of the TOR signaling pathway. Required in enterocytes for the efficient recovery of gut epithelium following the cytoplasmic purge response to bacterial infection. Acts cell-autonomously to promote the retrograde transport of amino acids into the intestinal epithelium. Acts non-cell-autonomously through the insulin signaling pathway to stimulate Myc expression and the release of amino acids from nutrient stores into the hemolymph. The chain is Proton-coupled amino acid transporter-like protein acs from Drosophila melanogaster (Fruit fly).